The chain runs to 540 residues: uncharacterized protein (540 aa).

2 ABC transporter domains span residues Ile-2–Gln-252 and Leu-320–Leu-537. Gly-34 to Ser-41 contacts ATP.

Belongs to the ABC transporter superfamily.

This is an uncharacterized protein from Bacillus subtilis (strain 168).